Consider the following 114-residue polypeptide: Large ribosomal subunit protein bL19 (114 aa).

The protein belongs to the bacterial ribosomal protein bL19 family.

Functionally, this protein is located at the 30S-50S ribosomal subunit interface and may play a role in the structure and function of the aminoacyl-tRNA binding site. This Clavibacter michiganensis subsp. michiganensis (strain NCPPB 382) protein is Large ribosomal subunit protein bL19.